The following is a 229-amino-acid chain: Flagellar L-ring protein (229 aa).

Residues 1 to 20 form the signal peptide; the sequence is MLKTVLRLPVCAALLALAAG. A lipid anchor (N-palmitoyl cysteine) is attached at Cys-21. Cys-21 is lipidated: S-diacylglycerol cysteine.

Belongs to the FlgH family. As to quaternary structure, the basal body constitutes a major portion of the flagellar organelle and consists of four rings (L,P,S, and M) mounted on a central rod.

It localises to the cell outer membrane. Its subcellular location is the bacterial flagellum basal body. Functionally, assembles around the rod to form the L-ring and probably protects the motor/basal body from shearing forces during rotation. The sequence is that of Flagellar L-ring protein from Bordetella pertussis (strain Tohama I / ATCC BAA-589 / NCTC 13251).